The sequence spans 398 residues: 1-deoxy-D-xylulose 5-phosphate reductoisomerase (398 aa).

Residues T13, G14, S15, I16, R40, and N127 each contribute to the NADPH site. Residue K128 coordinates 1-deoxy-D-xylulose 5-phosphate. E129 serves as a coordination point for NADPH. D153 serves as a coordination point for Mn(2+). The 1-deoxy-D-xylulose 5-phosphate site is built by S154, E155, S188, and H211. Mn(2+) is bound at residue E155. G217 is a binding site for NADPH. S224, N229, K230, and E233 together coordinate 1-deoxy-D-xylulose 5-phosphate. E233 serves as a coordination point for Mn(2+).

This sequence belongs to the DXR family. The cofactor is Mg(2+). It depends on Mn(2+) as a cofactor.

It catalyses the reaction 2-C-methyl-D-erythritol 4-phosphate + NADP(+) = 1-deoxy-D-xylulose 5-phosphate + NADPH + H(+). It functions in the pathway isoprenoid biosynthesis; isopentenyl diphosphate biosynthesis via DXP pathway; isopentenyl diphosphate from 1-deoxy-D-xylulose 5-phosphate: step 1/6. Its function is as follows. Catalyzes the NADPH-dependent rearrangement and reduction of 1-deoxy-D-xylulose-5-phosphate (DXP) to 2-C-methyl-D-erythritol 4-phosphate (MEP). The sequence is that of 1-deoxy-D-xylulose 5-phosphate reductoisomerase from Cellvibrio japonicus (strain Ueda107) (Pseudomonas fluorescens subsp. cellulosa).